The following is a 121-amino-acid chain: Large ribosomal subunit protein uL18 (121 aa).

The protein belongs to the universal ribosomal protein uL18 family. Part of the 50S ribosomal subunit; part of the 5S rRNA/L5/L18/L25 subcomplex. Contacts the 5S and 23S rRNAs.

In terms of biological role, this is one of the proteins that bind and probably mediate the attachment of the 5S RNA into the large ribosomal subunit, where it forms part of the central protuberance. This chain is Large ribosomal subunit protein uL18, found in Moorella thermoacetica (strain ATCC 39073 / JCM 9320).